The sequence spans 630 residues: Adenine DNA glycosylase (630 aa).

Residues 54–72 (MRKCREKKEAEREAEREAE) show a composition bias toward basic and acidic residues. A disordered region spans residues 54 to 123 (MRKCREKKEA…ALGGDIEDLF (70 aa)). Positions 73 to 123 (REAEEEEKAEEAEAEADKEEAEEESEEEEEEEEEEAEAEEEALGGDIEDLF) are enriched in acidic residues. The Proton donor/acceptor role is filled by glutamate 168. The [4Fe-4S] cluster site is built by cysteine 341, cysteine 348, cysteine 351, and cysteine 357. In terms of domain architecture, Nudix hydrolase spans 383–536 (PRHDFCCVCV…RKVPPFRLQH (154 aa)). A Nudix box motif is present at residues 427–451 (VILNEEADSATRRNAINVYLKEAFR).

It belongs to the Nth/MutY family. The cofactor is [4Fe-4S] cluster.

The protein resides in the nucleus. It carries out the reaction Hydrolyzes free adenine bases from 7,8-dihydro-8-oxoguanine:adenine mismatched double-stranded DNA, leaving an apurinic site.. Functionally, involved in oxidative DNA damage repair. Initiates repair of A*oxoG to C*G by removing the inappropriately paired adenine base from the DNA backbone. Possesses both adenine and 2-OH-A DNA glycosylase activities. This chain is Adenine DNA glycosylase (MYH), found in Arabidopsis thaliana (Mouse-ear cress).